The primary structure comprises 301 residues: Probable alpha-L-glutamate ligase (301 aa).

One can recognise an ATP-grasp domain in the interval 104–287; the sequence is LQLLSRKGIG…VAGMIYEFIE (184 aa). Residues lysine 141, 178–179, aspartate 187, and 211–213 each bind ATP; these read EF and RSN. Aspartate 248, glutamate 260, and asparagine 262 together coordinate Mg(2+). Mn(2+) is bound by residues aspartate 248, glutamate 260, and asparagine 262.

It belongs to the RimK family. Mg(2+) is required as a cofactor. The cofactor is Mn(2+).

This chain is Probable alpha-L-glutamate ligase, found in Vibrio vulnificus (strain CMCP6).